Here is a 120-residue protein sequence, read N- to C-terminus: Small ribosomal subunit protein uS13 (120 aa).

Positions 96–120 (PCRGQRTRTNARTRKGPRKAIAGKK) are disordered.

This sequence belongs to the universal ribosomal protein uS13 family. As to quaternary structure, part of the 30S ribosomal subunit. Forms a loose heterodimer with protein S19. Forms two bridges to the 50S subunit in the 70S ribosome.

Its function is as follows. Located at the top of the head of the 30S subunit, it contacts several helices of the 16S rRNA. In the 70S ribosome it contacts the 23S rRNA (bridge B1a) and protein L5 of the 50S subunit (bridge B1b), connecting the 2 subunits; these bridges are implicated in subunit movement. Contacts the tRNAs in the A and P-sites. The protein is Small ribosomal subunit protein uS13 of Dechloromonas aromatica (strain RCB).